We begin with the raw amino-acid sequence, 219 residues long: EP300-interacting inhibitor of differentiation 2 (219 aa).

A disordered region spans residues 1–71; that stretch reads MSELPADQGV…PVPEAREGPM (71 aa). Residues 20–34 show a composition bias toward basic and acidic residues; that stretch reads GDVRQAEVGGRRREP. Arginine 75 carries the post-translational modification Omega-N-methylarginine. Positions 95–115 are disordered; that stretch reads AEPAEEEGPEGRPRSRPGNGP.

As to quaternary structure, heterodimer with EID2B. Interacts with the C-terminus of EP300. Interacts with HDAC1 and HDAC2. Interacts with SMAD2, SMAD4 and with the MH2 domain of SMAD3.

It localises to the nucleus. Its function is as follows. Interacts with EP300 and acts as a repressor of MYOD-dependent transcription and muscle differentiation. Inhibits EP300 histone acetyltransferase activity. Acts as a repressor of TGFB/SMAD transcriptional responses. May act as a repressor of the TGFB/SMAD3-dependent signaling by selectively blocking formation of TGFB-induced SMAD3-SMAD4 complex. The chain is EP300-interacting inhibitor of differentiation 2 from Bos taurus (Bovine).